The following is a 326-amino-acid chain: 2-dehydropantoate 2-reductase (326 aa).

NADP(+) is bound by residues 7–12 (GAGAIG) and Asn103. Asn103 lines the substrate pocket. Lys205 (proton donor) is an active-site residue. Residues Asn209, Asn213, and Ser274 each contribute to the substrate site. Glu286 provides a ligand contact to NADP(+).

It belongs to the ketopantoate reductase family.

Its subcellular location is the cytoplasm. It catalyses the reaction (R)-pantoate + NADP(+) = 2-dehydropantoate + NADPH + H(+). Its pathway is cofactor biosynthesis; (R)-pantothenate biosynthesis; (R)-pantoate from 3-methyl-2-oxobutanoate: step 2/2. In terms of biological role, catalyzes the NADPH-dependent reduction of ketopantoate into pantoic acid. The polypeptide is 2-dehydropantoate 2-reductase (Mesorhizobium japonicum (strain LMG 29417 / CECT 9101 / MAFF 303099) (Mesorhizobium loti (strain MAFF 303099))).